The primary structure comprises 1256 residues: N-acetylglucosamine-1-phosphotransferase subunits alpha/beta (1256 aa).

Residues 22–42 (VCFLGVVVTIVSAFQFGEVVL) form a helical membrane-spanning segment. N-linked (GlcNAc...) asparagine glycans are attached at residues asparagine 83, asparagine 114, asparagine 148, asparagine 179, and asparagine 250. 4 disulfide bridges follow: cysteine 438-cysteine 461, cysteine 452-cysteine 468, cysteine 505-cysteine 528, and cysteine 519-cysteine 535. LNR repeat units follow at residues 438–473 (CAEGCPGSWIKDGYCDKACNNSACDWDGGDCSGNSG) and 505–545 (CNQG…ELYK). Ca(2+) contacts are provided by aspartate 449, aspartate 464, aspartate 467, aspartate 516, aspartate 531, and aspartate 534. 5 N-linked (GlcNAc...) asparagine glycosylation sites follow: asparagine 614, asparagine 699, asparagine 729, asparagine 829, and asparagine 1009. A DMAP1-binding domain is found at 699–798 (NISLLPKDAQ…TFPAVSVKVN (100 aa)). In terms of domain architecture, EF-hand spans 1005-1040 (VQPLNISQVFDEVDTDQSGVLSDREIRTLATRIHEL). Residues aspartate 1018, aspartate 1020, serine 1022, and glutamate 1029 each contribute to the Ca(2+) site. N-linked (GlcNAc...) asparagine glycosylation is present at asparagine 1129. A helical membrane pass occupies residues 1215-1235 (VLATLIMFTIFSFFAEQLIAL).

The protein belongs to the stealth family. Hexamer of two alpha, two beta and two gamma (GNPTG) subunits; disulfide-linked. The alpha and/or the beta subunits of the enzyme constitute the catalytic subunits. Interacts with LYSET; facilitates proper localization of GNPTAB. Post-translationally, the alpha- and beta-subunits are generated by a proteolytic cleavage by MBTPS1 protease at the Lys-928-Asp-929 bond. Expressed in the heart, whole brain, placenta, lung, liver, skeletal muscle, kidney and pancreas.

It is found in the golgi apparatus membrane. The enzyme catalyses N(4)-[alpha-D-mannosyl-(1-&gt;2)-alpha-D-mannosyl-(glycan)]-L-asparaginyl-[protein] + UDP-N-acetyl-alpha-D-glucosamine = N(4)-[6-(N-acetyl-alpha-D-glucosaminyl-1-phospho)-alpha-D-mannosyl-(1-&gt;2)-alpha-D-mannosyl-(glycan)]-L-asparaginyl-[protein] + UMP + H(+). Its function is as follows. Catalyzes the formation of mannose 6-phosphate (M6P) markers on high mannose type oligosaccharides in the Golgi apparatus. M6P residues are required to bind to the M6P receptors (MPR), which mediate the vesicular transport of lysosomal enzymes to the endosomal/prelysosomal compartment. This is N-acetylglucosamine-1-phosphotransferase subunits alpha/beta (GNPTAB) from Homo sapiens (Human).